The sequence spans 283 residues: NAD kinase (283 aa).

D68 serves as the catalytic Proton acceptor. NAD(+) is bound by residues 68 to 69 (DG), 142 to 143 (ND), R153, D172, 183 to 188 (TAYSLS), and Q242.

Belongs to the NAD kinase family. Requires a divalent metal cation as cofactor.

Its subcellular location is the cytoplasm. It carries out the reaction NAD(+) + ATP = ADP + NADP(+) + H(+). Involved in the regulation of the intracellular balance of NAD and NADP, and is a key enzyme in the biosynthesis of NADP. Catalyzes specifically the phosphorylation on 2'-hydroxyl of the adenosine moiety of NAD to yield NADP. This chain is NAD kinase, found in Caldanaerobacter subterraneus subsp. tengcongensis (strain DSM 15242 / JCM 11007 / NBRC 100824 / MB4) (Thermoanaerobacter tengcongensis).